Reading from the N-terminus, the 802-residue chain is MNFNNNNNNNNNNNNNNNLNNNNNNVNNINNNNKKPLTNSLAGTPPAKKILVIKNLKQIPKTPDNYEDSSWNKLSSAITSINMKQATTLTQEELYKMVENLCFDKILASNLYNKISVQIEKHITLTIKHLVLTMSSDPIIFLKSINSIWKDHTNQMIMIRSIFLYLDRTYVIQNSNTVKSIWDLGLFYFGNNLSQQSNLERKTIDSLLYSIRCEREGDEIDRDLIHSLVKMLSSLNIYTKFEIEFIKETNRFYDMEGNSKINEIETPMYLKYVCERLNQEGERLMRYLEQSTKKQLMAVLDRQLIERHVDVILEKGFNAMVNGDRLEDLGKLYQLLNSVGEIKKIKESWQSYIKQTGIQMLNDKEKEATLIQDLLDYKDRLDRILSQSFSKNELLTYALKESFEYFINTKQNKPAELVARFIDSKLKVGGKRMSEEELETVLNKSLILFRYIQGKDVFEAFYKQDLSKRLLLDKSTSIDAEKSMISKLKTECGTTFTAKLEEMFKDIELSNDIMNSFRDSPMTQNFKSIEMNIYVLTSGNWPIQPPIEATLPKEFLEYQEVFNKFYLSKHNGKTLKWQNALSYCVLKANFIQGKKELSVSLFQTIILYLFNDVIDGGELSFRDIQANTGLAIPELKKNLLSLCSSKSDILIQKKSSTSSNTSSNTSSNTSSSASGSASGGASGGATKTKVIDETDTFLFNSKFSSKLFKIKVNSIQIQETVEENQKTNENIISDRQYQVDAAIVRIMKTRKTLAHNLLISELVSLLKFQPKPVDLKKRIEILIEKEYLCRDPENAMIYNYMA.

2 stretches are compositionally biased toward low complexity: residues 1-33 (MNFNNNNNNNNNNNNNNNLNNNNNNVNNINNNN) and 656-676 (STSSNTSSNTSSNTSSSASGS). Disordered stretches follow at residues 1–43 (MNFN…SLAG) and 656–686 (STSSNTSSNTSSNTSSSASGSASGGASGGAT). In terms of domain architecture, Cullin neddylation spans 734-794 (DRQYQVDAAI…KEYLCRDPEN (61 aa)). Lys-748 is covalently cross-linked (Glycyl lysine isopeptide (Lys-Gly) (interchain with G-Cter in NEDD8)).

Belongs to the cullin family. In terms of processing, neddylated. Deneddylated via its interaction with the COP9 signalosome (CSN) complex.

It participates in protein modification; protein ubiquitination. In terms of biological role, probable core component of cullin-based SCF-like E3 ubiquitin-protein ligase complexes which mediate the ubiquitination and subsequent proteasomal degradation of target proteins. The E3 ubiquitin-protein ligase activity of the complex is dependent on the neddylation of the cullin subunit. This Dictyostelium discoideum (Social amoeba) protein is Cullin-4 (culD).